Here is a 208-residue protein sequence, read N- to C-terminus: Superoxide dismutase [Mn] (208 aa).

Mn(2+) contacts are provided by H27, H81, D168, and H172.

This sequence belongs to the iron/manganese superoxide dismutase family. In terms of assembly, homodimer. Mn(2+) is required as a cofactor.

It catalyses the reaction 2 superoxide + 2 H(+) = H2O2 + O2. Its function is as follows. Destroys superoxide anion radicals which are normally produced within the cells and which are toxic to biological systems. In Buchnera aphidicola subsp. Baizongia pistaciae (strain Bp), this protein is Superoxide dismutase [Mn] (sodA).